The chain runs to 332 residues: Ferredoxin--NADP reductase 2 (332 aa).

FAD is bound by residues glutamate 37, glutamine 45, tyrosine 50, valine 90, phenylalanine 124, aspartate 285, and threonine 326.

It belongs to the ferredoxin--NADP reductase type 2 family. As to quaternary structure, homodimer. FAD serves as cofactor.

It carries out the reaction 2 reduced [2Fe-2S]-[ferredoxin] + NADP(+) + H(+) = 2 oxidized [2Fe-2S]-[ferredoxin] + NADPH. The protein is Ferredoxin--NADP reductase 2 of Bacillus licheniformis (strain ATCC 14580 / DSM 13 / JCM 2505 / CCUG 7422 / NBRC 12200 / NCIMB 9375 / NCTC 10341 / NRRL NRS-1264 / Gibson 46).